Reading from the N-terminus, the 115-residue chain is Small ribosomal subunit protein bS18c (115 aa).

The segment at 91 to 115 is disordered; that stretch reads TNALKARTQNKDQKKEKFQINKKKK. The segment covering 99–109 has biased composition (basic and acidic residues); the sequence is QNKDQKKEKFQ.

This sequence belongs to the bacterial ribosomal protein bS18 family. As to quaternary structure, part of the 30S ribosomal subunit.

Its subcellular location is the plastid. It localises to the chloroplast. In Ipomoea purpurea (Common morning glory), this protein is Small ribosomal subunit protein bS18c.